The primary structure comprises 37 residues: Photosystem II reaction center protein M (37 aa).

The helical transmembrane segment at 5–25 (ILAFIATALFILVPTAFLLII) threads the bilayer.

This sequence belongs to the PsbM family. PSII is composed of 1 copy each of membrane proteins PsbA, PsbB, PsbC, PsbD, PsbE, PsbF, PsbH, PsbI, PsbJ, PsbK, PsbL, PsbM, PsbT, PsbX, PsbY, PsbZ, Psb30/Ycf12, at least 3 peripheral proteins of the oxygen-evolving complex and a large number of cofactors. It forms dimeric complexes.

Its subcellular location is the plastid. The protein localises to the chloroplast thylakoid membrane. In terms of biological role, one of the components of the core complex of photosystem II (PSII). PSII is a light-driven water:plastoquinone oxidoreductase that uses light energy to abstract electrons from H(2)O, generating O(2) and a proton gradient subsequently used for ATP formation. It consists of a core antenna complex that captures photons, and an electron transfer chain that converts photonic excitation into a charge separation. This subunit is found at the monomer-monomer interface. This Pelargonium hortorum (Common geranium) protein is Photosystem II reaction center protein M.